A 731-amino-acid chain; its full sequence is Autophagy-related protein 20 (731 aa).

Over residues 1–22 (MSSVLRNQDNPPTISEVSSTTK) the composition is skewed to polar residues. Residues 1-130 (MSSVLRNQDN…NNKSNNVSRV (130 aa)) form a disordered region. Over residues 31–41 (KQEEKEKEKEI) the composition is skewed to basic and acidic residues. Residues 69–82 (SFMTANSFNEGPNT) show a composition bias toward polar residues. 2 stretches are compositionally biased toward low complexity: residues 92 to 102 (NNNSSSNNNRG) and 113 to 128 (LLLY…NNVS). The region spanning 164-340 (IQITEAGNSN…KFLDPNANWG (177 aa)) is the PX domain. 3 residues coordinate a 1,2-diacyl-sn-glycero-3-phospho-(1D-myo-inositol-3-phosphate): Arg-205, Ser-207, and Lys-231. The interval 253 to 277 (SVAGSNGNSGGSGGGGASGGAGSGS) is disordered. Positions 259–277 (GNSGGSGGGGASGGAGSGS) are enriched in gly residues. Arg-306 serves as a coordination point for a 1,2-diacyl-sn-glycero-3-phospho-(1D-myo-inositol-3-phosphate). A disordered region spans residues 586–626 (NSQVKPKNGKYNLEQQQSSTVSPAPPPGPPPSSSSSSSSSS). A compositionally biased stretch (pro residues) spans 608-617 (PAPPPGPPPS).

Belongs to the sorting nexin family.

The protein localises to the endosome membrane. It localises to the preautophagosomal structure membrane. Its function is as follows. Required for cytoplasm to vacuole transport (Cvt), pexophagy and mitophagy. Also involved in endoplasmic reticulum-specific autophagic process and is essential for the survival of cells subjected to severe ER stress. Functions in protein retrieval from the endocytic pathway. The protein is Autophagy-related protein 20 (ATG20) of Candida albicans (strain SC5314 / ATCC MYA-2876) (Yeast).